Consider the following 62-residue polypeptide: Mu-elapitoxin-Na1a (62 aa).

Disulfide bonds link C3-C22, C15-C40, C44-C55, and C56-C61.

The protein belongs to the three-finger toxin family. Short-chain subfamily. Orphan group XV sub-subfamily. Expressed by the venom gland.

It localises to the secreted. Functionally, potent inhibitor of human Nav1.8/SCN10A (IC(50)=141-380 nM). Is highly selective for this channel and acts in a reversible manner. Shows a depolarizing shift of activation and hyperpolarizing shift of inactivation. In contrast to the very similar cytotoxin A5 (AC P62375), does not seem to bind integrin alpha-V/beta-3, since it does not promote or inhibit the proliferation of HUVECs and C-PAE cells. In vivo, in rodent models of inflammatory and neuropathic pain, it alleviates nociceptive behaviors more potently than does morphine. It displays no evident cytotoxic, hemolytic and cardiotoxic activities and produces no obvious adverse responses in mice even at a dose 30-fold higher than that producing a significant analgesic effect. The protein is Mu-elapitoxin-Na1a of Naja atra (Chinese cobra).